A 505-amino-acid polypeptide reads, in one-letter code: Aspartyl/glutamyl-tRNA(Asn/Gln) amidotransferase subunit B (505 aa).

The disordered stretch occupies residues 220–241 (NVSLRPRPAPGDPDAPFGTRSE).

This sequence belongs to the GatB/GatE family. GatB subfamily. Heterotrimer of A, B and C subunits.

It carries out the reaction L-glutamyl-tRNA(Gln) + L-glutamine + ATP + H2O = L-glutaminyl-tRNA(Gln) + L-glutamate + ADP + phosphate + H(+). It catalyses the reaction L-aspartyl-tRNA(Asn) + L-glutamine + ATP + H2O = L-asparaginyl-tRNA(Asn) + L-glutamate + ADP + phosphate + 2 H(+). In terms of biological role, allows the formation of correctly charged Asn-tRNA(Asn) or Gln-tRNA(Gln) through the transamidation of misacylated Asp-tRNA(Asn) or Glu-tRNA(Gln) in organisms which lack either or both of asparaginyl-tRNA or glutaminyl-tRNA synthetases. The reaction takes place in the presence of glutamine and ATP through an activated phospho-Asp-tRNA(Asn) or phospho-Glu-tRNA(Gln). The polypeptide is Aspartyl/glutamyl-tRNA(Asn/Gln) amidotransferase subunit B (Frankia casuarinae (strain DSM 45818 / CECT 9043 / HFP020203 / CcI3)).